The primary structure comprises 823 residues: Protein FAM83G (823 aa).

The residue at position 2 (alanine 2) is an N-acetylalanine. The segment at 2 to 312 (AFSQVQCLDD…LYLMSHSVSL (311 aa)) is DUF1669. Residue serine 4 is modified to Phosphoserine. The tract at residues 75–108 (DPGSEDPRGTGPSQGPEDNGVGDGEEASGADGVP) is disordered. Phosphoserine is present on residues serine 124, serine 127, and serine 356. The segment at 450–823 (RDTSQASAQH…AQAPRDRKDP (374 aa)) is disordered. Residues 452 to 465 (TSQASAQHQLWKQS) show a composition bias toward polar residues. Positions 497–508 (DPEPLPPVPKPR) are enriched in pro residues. Basic and acidic residues predominate over residues 529–543 (LPKEEAPQNGTDHRL). The segment covering 578–587 (GVEEEDDDDY) has biased composition (acidic residues). Phosphoserine occurs at positions 610, 614, 616, 650, and 666. 2 stretches are compositionally biased toward basic and acidic residues: residues 672-681 (RGREEADALK) and 809-823 (DSKRRAQAPRDRKDP).

This sequence belongs to the FAM83 family. Interacts with SMAD1 (via MH2 domain); in a SMAD4-independent manner. Directly interacts (via DUF1669) with casein kinase isoforms CSNK1A1 and CSNK1A1L. Post-translationally, phosphorylated in vitro by CSNK1A1. In terms of processing, BMP signaling induces the phosphorylation by BMPR1A at Ser-610, Ser-614 and Ser-616. Phosphorylation at Ser-610 is necessary for the activation of SMAD4-independent BMP target genes such as NEDD9 and ASNS.

It is found in the cytoplasm. Its subcellular location is the cytosol. The protein resides in the nucleus. Substrate for type I BMP receptor kinase involved in regulation of some target genes of the BMP signaling pathway. Also regulates the expression of several non-BMP target genes, suggesting a role in other signaling pathways. This chain is Protein FAM83G (FAM83G), found in Homo sapiens (Human).